We begin with the raw amino-acid sequence, 396 residues long: Methylthioribose kinase (396 aa).

ATP contacts are provided by residues asparagine 44, lysine 61, and 115 to 117 (EDL). Aspartate 233 is a binding site for substrate. Position 250-252 (250-252 (DPE)) interacts with ATP. Arginine 340 contributes to the substrate binding site.

The protein belongs to the methylthioribose kinase family. Homodimer.

It catalyses the reaction 5-(methylsulfanyl)-D-ribose + ATP = 5-(methylsulfanyl)-alpha-D-ribose 1-phosphate + ADP + H(+). Its pathway is amino-acid biosynthesis; L-methionine biosynthesis via salvage pathway; S-methyl-5-thio-alpha-D-ribose 1-phosphate from S-methyl-5'-thioadenosine (hydrolase route): step 2/2. In terms of biological role, catalyzes the phosphorylation of methylthioribose into methylthioribose-1-phosphate. This chain is Methylthioribose kinase, found in Geobacillus kaustophilus (strain HTA426).